The primary structure comprises 58 residues: Large ribosomal subunit protein eL24 (58 aa).

Zn(2+) contacts are provided by cysteine 6, cysteine 9, cysteine 32, and cysteine 36. The C4-type zinc-finger motif lies at 6 to 36; the sequence is CSFCGYDIEPGTGKMYVRRDGRVFYFCSGKC.

The protein belongs to the eukaryotic ribosomal protein eL24 family. As to quaternary structure, part of the 50S ribosomal subunit. Forms a cluster with proteins L3 and L14. Requires Zn(2+) as cofactor.

Functionally, binds to the 23S rRNA. The polypeptide is Large ribosomal subunit protein eL24 (Archaeoglobus fulgidus (strain ATCC 49558 / DSM 4304 / JCM 9628 / NBRC 100126 / VC-16)).